The sequence spans 156 residues: Ribosomal RNA large subunit methyltransferase H (156 aa).

S-adenosyl-L-methionine-binding positions include L74, G105, and 124–129 (LSKLTL).

Belongs to the RNA methyltransferase RlmH family. In terms of assembly, homodimer.

It localises to the cytoplasm. The catalysed reaction is pseudouridine(1915) in 23S rRNA + S-adenosyl-L-methionine = N(3)-methylpseudouridine(1915) in 23S rRNA + S-adenosyl-L-homocysteine + H(+). Functionally, specifically methylates the pseudouridine at position 1915 (m3Psi1915) in 23S rRNA. The polypeptide is Ribosomal RNA large subunit methyltransferase H (Legionella pneumophila (strain Lens)).